Consider the following 276-residue polypeptide: ESX-2 secretion-associated protein EspG2 (276 aa).

This sequence belongs to the EspG family. Interacts specifically with ESX-2-dependent PE/PPE proteins.

It is found in the cytoplasm. In terms of biological role, specific chaperone for cognate PE/PPE proteins. Plays an important role in preventing aggregation of PE/PPE dimers. This Mycobacterium tuberculosis (strain CDC 1551 / Oshkosh) protein is ESX-2 secretion-associated protein EspG2.